We begin with the raw amino-acid sequence, 280 residues long: 4-diphosphocytidyl-2-C-methyl-D-erythritol kinase (280 aa).

Residue K11 is part of the active site. 95–105 contributes to the ATP binding site; that stretch reads PVGAGLGGGSS. The active site involves D137.

It belongs to the GHMP kinase family. IspE subfamily.

It carries out the reaction 4-CDP-2-C-methyl-D-erythritol + ATP = 4-CDP-2-C-methyl-D-erythritol 2-phosphate + ADP + H(+). It functions in the pathway isoprenoid biosynthesis; isopentenyl diphosphate biosynthesis via DXP pathway; isopentenyl diphosphate from 1-deoxy-D-xylulose 5-phosphate: step 3/6. In terms of biological role, catalyzes the phosphorylation of the position 2 hydroxy group of 4-diphosphocytidyl-2C-methyl-D-erythritol. The sequence is that of 4-diphosphocytidyl-2-C-methyl-D-erythritol kinase from Geobacter sp. (strain M21).